A 99-amino-acid polypeptide reads, in one-letter code: Mitochondrial import receptor subunit TOM9-2 (99 aa).

At 2 to 51 the chain is on the cytoplasmic side; sequence AAKRIGAGKSGGGDPNILARISNSEIVSQGRRAAGDAVEVSKKLLRSTGK. The chain crosses the membrane as a helical span at residues 52–69; sequence AAWIAGTTFLILVVPLII. Residues 70–99 lie on the Mitochondrial intermembrane side of the membrane; it reads EMDREAQINEIELQQASLLGAPPSPMQRGL.

Belongs to the Tom22 family. Forms part of the preprotein translocase complex of the outer mitochondrial membrane (TOM complex) which consists of at least 6 different proteins (TOM5, TOM6, TOM7, TOM20, TOM22/TOM9 and TOM40). In terms of tissue distribution, expressed in young cotyledons, roots, flowers and leaves.

It is found in the mitochondrion outer membrane. Functionally, central component of the receptor complex responsible for the recognition and translocation of cytosolically synthesized mitochondrial preproteins. Together with TOM20 functions as the transit peptide receptor at the surface of the mitochondrion outer membrane and facilitates the movement of preproteins into the translocation pore. The protein is Mitochondrial import receptor subunit TOM9-2 (TOM9-2) of Arabidopsis thaliana (Mouse-ear cress).